We begin with the raw amino-acid sequence, 199 residues long: dITP/XTP pyrophosphatase (199 aa).

7 to 12 lines the substrate pocket; it reads SNNRGK. The active-site Proton acceptor is the aspartate 68. Aspartate 68 lines the Mg(2+) pocket. Residues alanine 69, 154 to 157, lysine 177, and 182 to 183 contribute to the substrate site; these read FGFD and HR.

Belongs to the HAM1 NTPase family. Homodimer. Mg(2+) is required as a cofactor.

The enzyme catalyses XTP + H2O = XMP + diphosphate + H(+). The catalysed reaction is dITP + H2O = dIMP + diphosphate + H(+). It catalyses the reaction ITP + H2O = IMP + diphosphate + H(+). Its function is as follows. Pyrophosphatase that catalyzes the hydrolysis of nucleoside triphosphates to their monophosphate derivatives, with a high preference for the non-canonical purine nucleotides XTP (xanthosine triphosphate), dITP (deoxyinosine triphosphate) and ITP. Seems to function as a house-cleaning enzyme that removes non-canonical purine nucleotides from the nucleotide pool, thus preventing their incorporation into DNA/RNA and avoiding chromosomal lesions. This chain is dITP/XTP pyrophosphatase, found in Albidiferax ferrireducens (strain ATCC BAA-621 / DSM 15236 / T118) (Rhodoferax ferrireducens).